A 458-amino-acid polypeptide reads, in one-letter code: MQKLSIPKGTRDFTPCEMDKRNYIFDTIRSVFYLYGFKQIETPALENLSTLLGKYGEENDKLLFKILNSGDFISKVNPIDWNNHQLSKLTKQISKKGLRYDLTLPLARFVVMHRNEITFPFKRFQIQPVWRSDRPQKGRYREFVQCDADIVGSDSLLNEVELIQIIDEVFHRLSISISIKINNRKILNGIAEIISEEKKITDITTAMDKLDKVGLTKVNEELLQKGISIQAIDQLQPFFLLKGSNQNKISTLKNILSTSPIGIKGLQEIETIFNKLNLIPTRNTIKFDLTLARGLNYYTGTIFEVKCLNVPIGSVLGGGRYDNLTNIFGLSNLSGVGISFGADRIFDILNQLNLYPNTNASHTQILFVNLGEKGVDFILPVLFSLRKVGINAELYPHNTKIKKQLSYAHNNQIPFVAIVGSTEIAENKITIKDMRSCSQFSIALDKLINFFQYERQSV.

It belongs to the class-II aminoacyl-tRNA synthetase family. In terms of assembly, homodimer.

The protein localises to the cytoplasm. The enzyme catalyses tRNA(His) + L-histidine + ATP = L-histidyl-tRNA(His) + AMP + diphosphate + H(+). This is Histidine--tRNA ligase from Azobacteroides pseudotrichonymphae genomovar. CFP2.